The following is a 372-amino-acid chain: Probable arabinan endo-1,5-alpha-L-arabinosidase B (372 aa).

Positions 1–16 (MTVLVALFCLVTWTLC) are cleaved as a signal peptide. The segment covering 23 to 34 (STQGTQQPQQPE) has biased composition (low complexity). Residues 23-52 (STQGTQQPQQPEKTPHPHPQPEDAFPPTHA) form a disordered region. Residue D59 is the Proton acceptor of the active site. N120 carries an N-linked (GlcNAc...) asparagine glycan. E252 (proton donor) is an active-site residue. N-linked (GlcNAc...) asparagine glycosylation occurs at N363.

The protein belongs to the glycosyl hydrolase 43 family.

The protein resides in the secreted. The enzyme catalyses Endohydrolysis of (1-&gt;5)-alpha-arabinofuranosidic linkages in (1-&gt;5)-arabinans.. It functions in the pathway glycan metabolism; L-arabinan degradation. Endo-1,5-alpha-L-arabinanase involved in degradation of pectin. Its preferred substrate is linear 1,5-alpha-L-arabinan. This chain is Probable arabinan endo-1,5-alpha-L-arabinosidase B (abnB), found in Aspergillus fumigatus (strain CBS 144.89 / FGSC A1163 / CEA10) (Neosartorya fumigata).